Reading from the N-terminus, the 248-residue chain is tRNA (guanine-N(1)-)-methyltransferase (248 aa).

Residues Gly113 and 133–138 (IGDYVL) each bind S-adenosyl-L-methionine.

It belongs to the RNA methyltransferase TrmD family. As to quaternary structure, homodimer.

It localises to the cytoplasm. The catalysed reaction is guanosine(37) in tRNA + S-adenosyl-L-methionine = N(1)-methylguanosine(37) in tRNA + S-adenosyl-L-homocysteine + H(+). Its function is as follows. Specifically methylates guanosine-37 in various tRNAs. This is tRNA (guanine-N(1)-)-methyltransferase from Shewanella frigidimarina (strain NCIMB 400).